Reading from the N-terminus, the 735-residue chain is Protein STRUBBELIG-RECEPTOR FAMILY 2 (735 aa).

An N-terminal signal peptide occupies residues 1–23; the sequence is MKTKQQLRFLATILLTTILFVLA. Residues 24 to 297 lie on the Extracellular side of the membrane; that stretch reads KTDTDPLEVL…KKKKKGIGAG (274 aa). 8 LRR repeats span residues 78–94, 96–119, 120–140, 142–163, 165–187, 189–211, 212–232, and 233–253; these read LRELKLLGSLGNQLQHL, NLKILDVSFNNLEGEIPFGLPPNA, THINMAYNNLTQSIPFSLPLM, SLQSLNLSHNSLSGPLGNVFSG, QIKEMDLSFNNLTGDLPSSFGTL, NLTSLYLQNNRLTGSVIYLADLP, LADLNIEDNQFSGIIPSHFQS, and IPHLWIWGNKFHVEPNYKPWK. N-linked (GlcNAc...) asparagine glycans are attached at residues Asn-118, Asn-128, Asn-147, Asn-175, and Asn-189. Asn-264 carries an N-linked (GlcNAc...) asparagine glycan. Residues 298–318 traverse the membrane as a helical segment; sequence STFLLVGGLALLGTFFALFAV. The Cytoplasmic portion of the chain corresponds to 319–735; it reads RMNHRRAQNL…SSPTFSYLSS (417 aa). The segment at 358-378 is disordered; it reads PQIKRFQPPPAPQLRHLPSPP. A Protein kinase domain is found at 415 to 695; sequence FSEENLLGEG…EIVEALTALI (281 aa).

Belongs to the protein kinase superfamily. Ser/Thr protein kinase family. In terms of tissue distribution, expressed in seedlings, roots, stems, leaves, flowers and siliques.

It localises to the membrane. The protein is Protein STRUBBELIG-RECEPTOR FAMILY 2 (SRF2) of Arabidopsis thaliana (Mouse-ear cress).